A 217-amino-acid polypeptide reads, in one-letter code: Ubiquitin-conjugating enzyme E2 1 (217 aa).

One can recognise a UBC core domain in the interval 4–151 (NRSRRIAKEL…AREWTSSYAA (148 aa)). The active-site Glycyl thioester intermediate is Cys-89.

Belongs to the ubiquitin-conjugating enzyme family.

It localises to the cytoplasm. It is found in the nucleus. It catalyses the reaction S-ubiquitinyl-[E1 ubiquitin-activating enzyme]-L-cysteine + [E2 ubiquitin-conjugating enzyme]-L-cysteine = [E1 ubiquitin-activating enzyme]-L-cysteine + S-ubiquitinyl-[E2 ubiquitin-conjugating enzyme]-L-cysteine.. It participates in protein modification; protein ubiquitination. In terms of biological role, catalyzes the covalent attachment of ubiquitin to other proteins. Functions in degradation of misfolded or regulated proteins localized in the endoplasmic reticulum (ER) lumen or membrane via the ubiquitin-proteasome system. Cognate E2 conjugating enzyme for the HRD1 ubiquitin ligase complex, which is part of the ERAD-L and ERAD-M pathways responsible for the rapid degradation of soluble lumenal and membrane proteins with misfolded lumenal domains (ERAD-L), or ER-membrane proteins with misfolded transmembrane domains (ERAD-M). In Schizosaccharomyces pombe (strain 972 / ATCC 24843) (Fission yeast), this protein is Ubiquitin-conjugating enzyme E2 1 (ubc1).